The following is a 253-amino-acid chain: Uridine phosphorylase (253 aa).

Belongs to the PNP/UDP phosphorylase family. Homohexamer.

The protein resides in the cytoplasm. It catalyses the reaction uridine + phosphate = alpha-D-ribose 1-phosphate + uracil. Its pathway is pyrimidine metabolism; UMP biosynthesis via salvage pathway; uracil from uridine (phosphorylase route): step 1/1. Catalyzes the reversible phosphorylytic cleavage of uridine to uracil and ribose-1-phosphate. Shows weak activity towards deoxyuridine and thymidine. The produced molecules are then utilized as carbon and energy sources or in the rescue of pyrimidine bases for nucleotide synthesis. In Escherichia coli (strain K12), this protein is Uridine phosphorylase.